Reading from the N-terminus, the 377-residue chain is UPF0754 membrane protein LMHCC_0318 (377 aa).

Helical transmembrane passes span M1–T21 and Y357–I377.

This sequence belongs to the UPF0754 family.

Its subcellular location is the cell membrane. The protein is UPF0754 membrane protein LMHCC_0318 of Listeria monocytogenes serotype 4a (strain HCC23).